Reading from the N-terminus, the 473-residue chain is Photosystem II CP43 reaction center protein (473 aa).

A propeptide spanning residues 1 to 14 (MKTLYSLRRFYHVE) is cleaved from the precursor. The residue at position 15 (T15) is an N-acetylthreonine. T15 is subject to Phosphothreonine. Helical transmembrane passes span 69-93 (LFEV…PHLA), 134-155 (LLGP…KDRN), 178-200 (KALY…RKIT), 255-275 (KPFA…LSYS), and 291-312 (WFNN…ASQA). A [CaMn4O5] cluster-binding site is contributed by E367. A helical membrane pass occupies residues 447-471 (RARAAAAGFEKGIDRDFEPVLSMTP).

Belongs to the PsbB/PsbC family. PsbC subfamily. In terms of assembly, PSII is composed of 1 copy each of membrane proteins PsbA, PsbB, PsbC, PsbD, PsbE, PsbF, PsbH, PsbI, PsbJ, PsbK, PsbL, PsbM, PsbT, PsbX, PsbY, PsbZ, Psb30/Ycf12, at least 3 peripheral proteins of the oxygen-evolving complex and a large number of cofactors. It forms dimeric complexes. Binds multiple chlorophylls and provides some of the ligands for the Ca-4Mn-5O cluster of the oxygen-evolving complex. It may also provide a ligand for a Cl- that is required for oxygen evolution. PSII binds additional chlorophylls, carotenoids and specific lipids. is required as a cofactor.

The protein localises to the plastid. The protein resides in the chloroplast thylakoid membrane. Functionally, one of the components of the core complex of photosystem II (PSII). It binds chlorophyll and helps catalyze the primary light-induced photochemical processes of PSII. PSII is a light-driven water:plastoquinone oxidoreductase, using light energy to abstract electrons from H(2)O, generating O(2) and a proton gradient subsequently used for ATP formation. The sequence is that of Photosystem II CP43 reaction center protein from Aethionema cordifolium (Lebanon stonecress).